A 354-amino-acid polypeptide reads, in one-letter code: Galactose-1-phosphate uridylyltransferase (354 aa).

The segment at 36-72 is disordered; sequence TVTTSEVRRDPLLGDSAPSRLAPQGRTYHPPADQCPL. Positions 70, 73, and 114 each coordinate Zn(2+). Asparagine 154 serves as a coordination point for UDP-alpha-D-glucose. Residue histidine 165 coordinates Zn(2+). Catalysis depends on histidine 167, which acts as the Tele-UMP-histidine intermediate. Glutamine 169 and glutamine 332 together coordinate UDP-alpha-D-glucose.

This sequence belongs to the galactose-1-phosphate uridylyltransferase type 1 family. Zn(2+) is required as a cofactor.

The enzyme catalyses alpha-D-galactose 1-phosphate + UDP-alpha-D-glucose = alpha-D-glucose 1-phosphate + UDP-alpha-D-galactose. It functions in the pathway carbohydrate metabolism; galactose metabolism. The polypeptide is Galactose-1-phosphate uridylyltransferase (galT) (Streptomyces lividans).